We begin with the raw amino-acid sequence, 255 residues long: Ornithine decarboxylase antizyme (255 aa).

It belongs to the ODC antizyme family. In terms of assembly, interacts with ODC and thereby sterically blocks ODC homodimerization.

Ornithine decarboxylase (ODC) antizyme protein that negatively regulates ODC activity and intracellular polyamine biosynthesis in response to increased intracellular polyamine levels. Binds to ODC monomers, inhibiting the assembly of the functional ODC homodimer, and targets the monomers for ubiquitin-independent proteolytic destruction by the 26S proteasome. This is Ornithine decarboxylase antizyme (OAZ1) from Candida glabrata (strain ATCC 2001 / BCRC 20586 / JCM 3761 / NBRC 0622 / NRRL Y-65 / CBS 138) (Yeast).